The following is a 44-amino-acid chain: Photosystem I reaction center subunit IX (44 aa).

The chain crosses the membrane as a helical span at residues 7 to 27; it reads YLSTAPVLATLWFGSLAGLLI.

The protein belongs to the PsaJ family.

The protein resides in the plastid. It localises to the chloroplast thylakoid membrane. May help in the organization of the PsaE and PsaF subunits. The sequence is that of Photosystem I reaction center subunit IX from Calycanthus floridus var. glaucus (Eastern sweetshrub).